An 86-amino-acid chain; its full sequence is Small ribosomal subunit protein uS17 (86 aa).

This sequence belongs to the universal ribosomal protein uS17 family. In terms of assembly, part of the 30S ribosomal subunit.

In terms of biological role, one of the primary rRNA binding proteins, it binds specifically to the 5'-end of 16S ribosomal RNA. In Methylococcus capsulatus (strain ATCC 33009 / NCIMB 11132 / Bath), this protein is Small ribosomal subunit protein uS17.